A 150-amino-acid chain; its full sequence is Transcription antitermination protein NusB (150 aa).

This sequence belongs to the NusB family.

Its function is as follows. Involved in transcription antitermination. Required for transcription of ribosomal RNA (rRNA) genes. Binds specifically to the boxA antiterminator sequence of the ribosomal RNA (rrn) operons. In Streptococcus pyogenes serotype M3 (strain ATCC BAA-595 / MGAS315), this protein is Transcription antitermination protein NusB.